The following is a 134-amino-acid chain: Arsenate reductase 2 (134 aa).

Catalysis depends on nucleophile residues Cys11, Cys83, and Cys90. 2 disulfides stabilise this stretch: Cys11–Cys83 and Cys83–Cys90.

It belongs to the low molecular weight phosphotyrosine protein phosphatase family. Thioredoxin-coupled ArsC subfamily.

It localises to the cytoplasm. The catalysed reaction is arsenate + [thioredoxin]-dithiol + H(+) = arsenite + [thioredoxin]-disulfide + H2O. Its function is as follows. Catalyzes the reduction of arsenate [As(V)] to arsenite [As(III)]. This is Arsenate reductase 2 from Bacillus cereus (strain ATCC 10987 / NRS 248).